A 313-amino-acid polypeptide reads, in one-letter code: uncharacterized protein (313 aa).

The next 6 membrane-spanning stretches (helical) occupy residues 16–36, 106–126, 155–175, 208–228, 233–253, and 286–306; these read AGTW…AFLA, FTIL…ANEF, FGLL…LIFF, LSES…SAVF, LAVG…AFIA, and FSLV…FGIF.

The protein localises to the cell membrane. This is an uncharacterized protein from Bacillus subtilis (strain 168).